A 307-amino-acid polypeptide reads, in one-letter code: Taste receptor type 2 member 10 (307 aa).

Residues 1–6 lie on the Extracellular side of the membrane; it reads MLRVVE. Residues 7–27 traverse the membrane as a helical segment; it reads GIFIFVVISEXVFGVLGNGFI. The Cytoplasmic portion of the chain corresponds to 28–42; it reads GLVNCIDCAKNKLST. The helical transmembrane segment at 43–63 threads the bilayer; that stretch reads IGFILTGLAISRIFLIWIIIT. At 64 to 100 the chain is on the extracellular side; that stretch reads DGFIQIFSPDIYASGNLIEYISYFWVIGNQSSMWFAT. N92 carries an N-linked (GlcNAc...) asparagine glycan. The chain crosses the membrane as a helical span at residues 101 to 121; it reads SLSIFYFLKIANFSNYIFLWL. At 122-126 the chain is on the cytoplasmic side; it reads KSRTN. A helical membrane pass occupies residues 127–147; it reads MVLPFMIVFLLISSLLNFAHI. Over 148-179 the chain is Extracellular; sequence AKILNDYKMKNDTVWDLNMYKSEYFIKQILLN. Residue N158 is glycosylated (N-linked (GlcNAc...) asparagine). A helical transmembrane segment spans residues 180-200; sequence LGVIFFFTLSLITCVFLIISL. Topologically, residues 201–227 are cytoplasmic; the sequence is WRHNRQMQSNVTGLRDSNTEAHVKAMK. A helical transmembrane segment spans residues 228-248; that stretch reads VLISFXILFILYFIGMAIEIS. Over 249 to 257 the chain is Extracellular; it reads CFTVRENKL. A helical transmembrane segment spans residues 258-278; that stretch reads LLMFGMTTTAIYPWGHSFILI. Over 279 to 307 the chain is Cytoplasmic; sequence LGNSKLKQASLRVLQQLKCCEKRKNLRVT.

Belongs to the G-protein coupled receptor T2R family.

It is found in the membrane. In terms of biological role, receptor that may play a role in the perception of bitterness and is gustducin-linked. May play a role in sensing the chemical composition of the gastrointestinal content. The activity of this receptor may stimulate alpha gustducin, mediate PLC-beta-2 activation and lead to the gating of TRPM5. This chain is Taste receptor type 2 member 10 (TAS2R10), found in Gorilla gorilla gorilla (Western lowland gorilla).